Reading from the N-terminus, the 369-residue chain is Probable L-tyrosine/L-aspartate decarboxylase (369 aa).

Lys224 carries the N6-(pyridoxal phosphate)lysine modification.

Belongs to the group II decarboxylase family. MfnA subfamily. Pyridoxal 5'-phosphate is required as a cofactor.

The catalysed reaction is L-tyrosine + H(+) = tyramine + CO2. The enzyme catalyses L-aspartate + H(+) = beta-alanine + CO2. The protein operates within cofactor biosynthesis; methanofuran biosynthesis. Its pathway is cofactor biosynthesis; coenzyme A biosynthesis. Its function is as follows. Catalyzes the decarboxylation of L-tyrosine to produce tyramine for methanofuran biosynthesis. Can also catalyze the decarboxylation of L-aspartate to produce beta-alanine for coenzyme A (CoA) biosynthesis. This Methanospirillum hungatei JF-1 (strain ATCC 27890 / DSM 864 / NBRC 100397 / JF-1) protein is Probable L-tyrosine/L-aspartate decarboxylase.